The primary structure comprises 639 residues: ATP-dependent zinc metalloprotease FtsH (639 aa).

At 1–15 (MDNEKQASPPPAAPP) the chain is on the cytoplasmic side. Residues 16–36 (LNWRYLLWIILLGIFLISWLG) traverse the membrane as a helical segment. Over 37–123 (NAGRQAGDEI…VQAKSEEPSL (87 aa)) the chain is Periplasmic. A helical membrane pass occupies residues 124 to 144 (WMQAIIGILPWFLILGLIFYV). Topologically, residues 145–639 (SYRMQQRMMG…HNEAVATGAG (495 aa)) are cytoplasmic. 221-228 (GRPGTGKT) serves as a coordination point for ATP. His442 is a Zn(2+) binding site. Glu443 is a catalytic residue. Residues His446 and Asp518 each coordinate Zn(2+).

The protein in the central section; belongs to the AAA ATPase family. This sequence in the C-terminal section; belongs to the peptidase M41 family. Homohexamer. Requires Zn(2+) as cofactor.

Its subcellular location is the cell inner membrane. Its function is as follows. Acts as a processive, ATP-dependent zinc metallopeptidase for both cytoplasmic and membrane proteins. Plays a role in the quality control of integral membrane proteins. This chain is ATP-dependent zinc metalloprotease FtsH, found in Nitrosococcus oceani (strain ATCC 19707 / BCRC 17464 / JCM 30415 / NCIMB 11848 / C-107).